The chain runs to 348 residues: Galactose-1-phosphate uridylyltransferase (348 aa).

28–31 (RAKR) is a binding site for UDP-alpha-D-glucose. Zn(2+)-binding residues include C52 and C55. UDP-alpha-D-glucose is bound by residues V61 and 77 to 78 (ND). H115 contributes to the Zn(2+) binding site. Residues N153 and 159 to 161 (GCS) each bind UDP-alpha-D-glucose. H164 contributes to the Zn(2+) binding site. The Tele-UMP-histidine intermediate role is filled by H166. Residue Q168 coordinates UDP-alpha-D-glucose. Fe cation-binding residues include E182, H281, H296, and H298. UDP-alpha-D-glucose contacts are provided by residues 311–312 (KF), 316–317 (YE), and Q323.

This sequence belongs to the galactose-1-phosphate uridylyltransferase type 1 family. Requires Zn(2+) as cofactor.

The catalysed reaction is alpha-D-galactose 1-phosphate + UDP-alpha-D-glucose = alpha-D-glucose 1-phosphate + UDP-alpha-D-galactose. It participates in carbohydrate metabolism; galactose metabolism. In Salmonella typhimurium (strain LT2 / SGSC1412 / ATCC 700720), this protein is Galactose-1-phosphate uridylyltransferase (galT).